Reading from the N-terminus, the 303-residue chain is Coenzyme PQQ synthesis protein B (303 aa).

Belongs to the PqqB family.

Its pathway is cofactor biosynthesis; pyrroloquinoline quinone biosynthesis. May be involved in the transport of PQQ or its precursor to the periplasm. The polypeptide is Coenzyme PQQ synthesis protein B (Pseudomonas entomophila (strain L48)).